A 396-amino-acid polypeptide reads, in one-letter code: Putative pyridoxal phosphate-dependent acyltransferase (396 aa).

111 to 112 (GF) provides a ligand contact to pyridoxal 5'-phosphate. Histidine 136 serves as a coordination point for substrate. Pyridoxal 5'-phosphate is bound by residues serine 186, 211–214 (DDAH), and 241–244 (TLSK). Lysine 244 bears the N6-(pyridoxal phosphate)lysine mark. Threonine 358 is a substrate binding site.

It belongs to the class-II pyridoxal-phosphate-dependent aminotransferase family. Homodimer. The cofactor is pyridoxal 5'-phosphate.

This chain is Putative pyridoxal phosphate-dependent acyltransferase, found in Bacillus cereus (strain ATCC 14579 / DSM 31 / CCUG 7414 / JCM 2152 / NBRC 15305 / NCIMB 9373 / NCTC 2599 / NRRL B-3711).